The primary structure comprises 122 residues: Double-headed protease inhibitor, submandibular gland (122 aa).

Kazal-like domains lie at Gly10–Ile70 and Glu71–Ser121. 6 disulfides stabilise this stretch: Cys16/Cys50, Cys28/Cys47, Cys36/Cys68, Cys72/Cys101, Cys79/Cys98, and Cys87/Cys119.

The protein resides in the secreted. Its function is as follows. This inhibitor is composed of two homologous actively inhibiting halves: one which inhibits trypsin, the other which inhibits elastase. This Meles meles (Eurasian badger) protein is Double-headed protease inhibitor, submandibular gland.